The following is a 685-amino-acid chain: MDVCARLALWLLWGLLLHQGQSLSHSHSEKNTGASSGATSEESTEAEFCRIDKPLCHSEDEKLSFEAVRNIHKLMDDDANGDVDVEESDEFLREDLNYHDPTVKHSTFHGEDKLISVEDLWKAWKSSEVYNWTVDEVIQWLITYVELPQYEETFRKLQLTGHAMPRLAVTNTTMTGTVLKMTDRSHRQKLQLKALDTVLFGPPLLTRHNHLKDFMLVVSIVIGVGGCWFAYIQNRYSKEHMKKMMKDLEGLHRAEQSLHDLQERLHKAQEEHRTVEVEKVHLEKKLRDEINLAKQEAQRLKELREGTENERSRQKYAEEELEQVREALRKAEKELESHSSWYAPEALQKWLQLTHEVEVQYYNIKKQNAERQLLVAKEGAEKIKKKRNTLFGTFHVAHSSSLDDVDHKILTAKQALSEVTAALRERLHRWQQIEILCGFQIVNNPGIHSLVAALNIDPSWMGSTRPNPAHFIMTDDVDDMDEEIVSPLSMQSPSLQSSVRQRLTEPQLGLGSQRDLTHSDSESSLHMSDRQRVAPKPPQMGRAADEALNAMPSNGSHRLIEGVHPGSLVEKLPDSPALAKKTFMALNHGLDKAHSLMELNPSVPPGGSPLLDSSHSLSPSSPDPDTPSPVGDNRALQGSRNTRIPHLAGKKAMAEEDNGSIGEETDSSPGRKKFPLKIFKKPLKK.

The first 22 residues, 1–22, serve as a signal peptide directing secretion; sequence MDVCARLALWLLWGLLLHQGQS. At 23 to 213 the chain is on the extracellular side; that stretch reads LSHSHSEKNT…LLTRHNHLKD (191 aa). The disordered stretch occupies residues 24–43; it reads SHSHSEKNTGASSGATSEES. Positions 32–41 are enriched in low complexity; sequence TGASSGATSE. EF-hand domains lie at 64-97 and 102-126; these read SFEAVRNIHKLMDDDANGDVDVEESDEFLREDLN and TVKHSTFHGEDKLISVEDLWKAWKS. Ca(2+)-binding residues include Asp-76, Asp-78, Asn-80, Asp-82, and Glu-87. N-linked (GlcNAc...) asparagine glycans are attached at residues Asn-131 and Asn-171. The region spanning 132-200 is the SAM domain; the sequence is WTVDEVIQWL…QLKALDTVLF (69 aa). A helical transmembrane segment spans residues 214 to 234; it reads FMLVVSIVIGVGGCWFAYIQN. Residues 235–685 lie on the Cytoplasmic side of the membrane; that stretch reads RYSKEHMKKM…LKIFKKPLKK (451 aa). Residues 248-442 adopt a coiled-coil conformation; sequence LEGLHRAEQS…IEILCGFQIV (195 aa). Ser-257 carries the phosphoserine modification. The SOAR/CAD stretch occupies residues 344 to 442; sequence PEALQKWLQL…IEILCGFQIV (99 aa). Residues 475–483 form a contributes to fast Ca(2+)-dependent inactivation of CRAC channels region; it reads DDVDDMDEE. Over residues 490-499 the composition is skewed to low complexity; sequence MQSPSLQSSV. Residues 490–541 are disordered; it reads MQSPSLQSSVRQRLTEPQLGLGSQRDLTHSDSESSLHMSDRQRVAPKPPQMG. Residue Thr-504 is modified to Phosphothreonine. A Phosphoserine modification is found at Ser-512. Basic and acidic residues predominate over residues 515–532; that stretch reads DLTHSDSESSLHMSDRQR. At Thr-517 the chain carries Phosphothreonine. Phosphoserine is present on residues Ser-519, Ser-521, Ser-523, Ser-524, Ser-567, Ser-575, Ser-602, Ser-608, Ser-618, Ser-621, and Ser-628. The segment at 596–685 is disordered; the sequence is LMELNPSVPP…LKIFKKPLKK (90 aa). Over residues 608 to 620 the composition is skewed to low complexity; the sequence is SPLLDSSHSLSPS. A Microtubule tip localization signal motif is present at residues 642–645; the sequence is TRIP. Positions 655–666 are enriched in acidic residues; it reads EEDNGSIGEETD. Residue Ser-660 is modified to Phosphoserine. Thr-665 carries the phosphothreonine modification. Ser-668 bears the Phosphoserine mark. Residues 670 to 685 show a composition bias toward basic residues; that stretch reads GRKKFPLKIFKKPLKK. The interval 672 to 685 is required for generation of inwardly rectifying CRAC currents; sequence KKFPLKIFKKPLKK.

As to quaternary structure, monomer in the presence of Ca(2+). It oligomerizes in absence of Ca(2+). Forms homooligomers and heterooligomers with STIM2. Interacts with pore-forming subunits of CRAC channels, ORAI1, ORAI2 and ORAI3; this interaction is potentiated upon Ca(2+) store depletion. Interacts (via the transmembrane region and the SOAR/CAD domain) with SPPL3; the interaction promotes the binding of STIM1 to ORAI1. Interacts with ORAI1. Interacts with MAPRE1; probably required for targeting to the growing microtubule plus ends. Interacts with CRACR2A/EFCAB4B; the interaction is direct and takes place in absence of Ca(2+). Forms a complex with CRACR2A/EFCAB4B and ORAI1 at low concentration of Ca(2+), the complex dissociates at elevated Ca(2+) concentrations. Interacts with SARAF, promoting a slow inactivation of STIM1-dependent SOCE activity, possibly by facilitating the deoligomerization of STIM1. Interacts with EFHB; the interaction takes place upon Ca(2+)-store depletion and inhibits the association with SARAF. Interacts with ASPH. Interacts with SLC35G1; intracellular Ca(2+)-dependent. May interact with ATP1A1, ATP2A2, ATP2B1, ATP2B4, KPNB1 and XPO1; through SLC35G1. Interacts with STIMATE, promoting STIM1 conformational switch. Interacts with TMEM178A. Interacts with CASQ1 (via C-terminal end and preferentially with the monomeric form); this interaction increases in response to a depletion of intracellular Ca(2+), decreases both STIM1 aggregation and clustering, interaction of STIM1 with ORAI1 and store-operated Ca(2+) entry (SOCE) activity. Interacts with ADCY8. Interacts with TMEM203. Post-translationally, glycosylation is required for cell surface expression. Phosphorylated predominantly on Ser residues. Expressed in maturation-stage ameloblasts (at protein level). Expressed in all tissues examined and in many cell types, including bone marrow stroma, fibroblast, B-cell precursors, lymphoma and erythroleukemia.

It is found in the cell membrane. It localises to the endoplasmic reticulum membrane. Its subcellular location is the sarcoplasmic reticulum. The protein localises to the cytoplasm. The protein resides in the cytoskeleton. In terms of biological role, acts as a Ca(2+) sensor that gates two major inward rectifying Ca(2+) channels at the plasma membrane: Ca(2+) release-activated Ca(2+) (CRAC) channels and arachidonate-regulated Ca(2+)-selective (ARC) channels. Plays a role in mediating store-operated Ca(2+) entry (SOCE), a Ca(2+) influx following depletion of intracellular Ca(2+) stores. Upon Ca(2+) depletion, translocates from the endoplasmic reticulum to the plasma membrane where it activates CRAC channel pore-forming subunits ORA1, ORA2 and ORAI3 to generate sustained and oscillatory Ca(2+) entry. Involved in enamel formation. The protein is Stromal interaction molecule 1 (Stim1) of Mus musculus (Mouse).